The chain runs to 302 residues: ATP synthase gamma chain (302 aa).

This sequence belongs to the ATPase gamma chain family. F-type ATPases have 2 components, CF(1) - the catalytic core - and CF(0) - the membrane proton channel. CF(1) has five subunits: alpha(3), beta(3), gamma(1), delta(1), epsilon(1). CF(0) has three main subunits: a, b and c.

The protein localises to the cell inner membrane. In terms of biological role, produces ATP from ADP in the presence of a proton gradient across the membrane. The gamma chain is believed to be important in regulating ATPase activity and the flow of protons through the CF(0) complex. This is ATP synthase gamma chain from Bartonella bacilliformis (strain ATCC 35685 / KC583 / Herrer 020/F12,63).